A 206-amino-acid polypeptide reads, in one-letter code: Ribosomal RNA large subunit methyltransferase E (206 aa).

S-adenosyl-L-methionine-binding residues include Gly-61, Trp-63, Asp-81, Asp-97, and Asp-122. Residue Lys-162 is the Proton acceptor of the active site.

The protein belongs to the class I-like SAM-binding methyltransferase superfamily. RNA methyltransferase RlmE family.

It is found in the cytoplasm. It catalyses the reaction uridine(2552) in 23S rRNA + S-adenosyl-L-methionine = 2'-O-methyluridine(2552) in 23S rRNA + S-adenosyl-L-homocysteine + H(+). Its function is as follows. Specifically methylates the uridine in position 2552 of 23S rRNA at the 2'-O position of the ribose in the fully assembled 50S ribosomal subunit. The sequence is that of Ribosomal RNA large subunit methyltransferase E from Neisseria gonorrhoeae (strain NCCP11945).